A 98-amino-acid chain; its full sequence is Large ribosomal subunit protein uL23c (98 aa).

Belongs to the universal ribosomal protein uL23 family. Part of the 50S ribosomal subunit.

Its subcellular location is the plastid. The protein localises to the chloroplast. Its function is as follows. Binds to 23S rRNA. This is Large ribosomal subunit protein uL23c (rpl23) from Thalassiosira pseudonana (Marine diatom).